A 66-amino-acid chain; its full sequence is MPKLKTKSGAKKRFKVTATGKVMHAQRGKRHGMIKRTKKQIRQLRGTRVLFKTDGDNVKKYFLPNA.

This sequence belongs to the bacterial ribosomal protein bL35 family.

The polypeptide is Large ribosomal subunit protein bL35 (Bradyrhizobium diazoefficiens (strain JCM 10833 / BCRC 13528 / IAM 13628 / NBRC 14792 / USDA 110)).